A 186-amino-acid chain; its full sequence is Probable nicotinate-nucleotide adenylyltransferase (186 aa).

Belongs to the NadD family.

It catalyses the reaction nicotinate beta-D-ribonucleotide + ATP + H(+) = deamido-NAD(+) + diphosphate. Its pathway is cofactor biosynthesis; NAD(+) biosynthesis; deamido-NAD(+) from nicotinate D-ribonucleotide: step 1/1. Catalyzes the reversible adenylation of nicotinate mononucleotide (NaMN) to nicotinic acid adenine dinucleotide (NaAD). This Tropheryma whipplei (strain TW08/27) (Whipple's bacillus) protein is Probable nicotinate-nucleotide adenylyltransferase.